The sequence spans 434 residues: Histidine--tRNA ligase (434 aa).

Residues 412-434 (DQTTVPVEAFPGDHDAPTYEDVV) are disordered.

It belongs to the class-II aminoacyl-tRNA synthetase family.

The protein resides in the cytoplasm. The catalysed reaction is tRNA(His) + L-histidine + ATP = L-histidyl-tRNA(His) + AMP + diphosphate + H(+). The chain is Histidine--tRNA ligase from Haloquadratum walsbyi (strain DSM 16790 / HBSQ001).